The chain runs to 133 residues: Sigma factor-binding protein Crl (133 aa).

An essential for activity region spans residues 99–122; the sequence is TLDDFYVKLTKFVKEDCQLDLQAS.

Belongs to the Crl family.

The protein localises to the cytoplasm. Functionally, binds to the sigma-S subunit of RNA polymerase, activating expression of sigma-S-regulated genes. Stimulates RNA polymerase holoenzyme formation and may bind to several other sigma factors, such as sigma-70 and sigma-32. This Photobacterium profundum (strain SS9) protein is Sigma factor-binding protein Crl.